The sequence spans 481 residues: Arylsulfatase (481 aa).

Residues D11, Q12, and C51 each contribute to the Ca(2+) site. The active-site Nucleophile is C51. C51 is subject to 3-oxoalanine (Cys). The active site involves H102. Residues D302 and H303 each coordinate Ca(2+).

The protein belongs to the sulfatase family. It depends on Ca(2+) as a cofactor. In terms of processing, the conversion to 3-oxoalanine (also known as C-formylglycine, FGly), of a serine or cysteine residue in prokaryotes and of a cysteine residue in eukaryotes, is critical for catalytic activity.

The enzyme catalyses an aryl sulfate + H2O = a phenol + sulfate + H(+). Has sulfatase activity toward para-nitrophenyl sulfate, which is increased in presence of calcium ion. This is Arylsulfatase from Clostridium perfringens (strain 13 / Type A).